Reading from the N-terminus, the 83-residue chain is Large ribosomal subunit protein eL37 (83 aa).

Zn(2+) contacts are provided by Cys-19, Cys-22, Cys-34, and Cys-37. The segment at 19-37 (CRRCGRNSYHVQWERCAAC) adopts a C4-type zinc-finger fold.

Belongs to the eukaryotic ribosomal protein eL37 family. Zn(2+) is required as a cofactor.

In terms of biological role, binds to the 23S rRNA. The chain is Large ribosomal subunit protein eL37 (RPL37) from Leishmania donovani.